Here is a 301-residue protein sequence, read N- to C-terminus: MATSNSSDSSMSAEVPAPYGNGPANAPATPSDTAKKPVARIRTHHLQQAKDKGEHFAMLTAYEQYTAEIFDEAGIEVLLVGDSASNNVFGNETSLPVTVDELLPLCRAVARSAKRALVVADLPFGSYEVSAEQAVATGVRFLKEGLAHAVKIEGGKFYADTVRAMVQAGIPVMAHIGFTPQSEHSLGGYRVQGRGDDAQRLIDDAVALAEAGAFSVLMEMVPAATAAAVDAAIAVPTVGIGAGNTTTGQVLVWQDMAGLRGGKMAKFVKQYADLRTSLSNAAKAYGDDVRTGQFPGPEHSF.

The span at M1 to A28 shows a compositional bias: low complexity. Residues M1 to P37 are disordered. Residues D82 and D121 each coordinate Mg(2+). 3-methyl-2-oxobutanoate-binding positions include D82 to S83, D121, and K151. Residue E153 participates in Mg(2+) binding. Residue E219 is the Proton acceptor of the active site.

It belongs to the PanB family. In terms of assembly, homodecamer; pentamer of dimers. Mg(2+) serves as cofactor.

It is found in the cytoplasm. The catalysed reaction is 3-methyl-2-oxobutanoate + (6R)-5,10-methylene-5,6,7,8-tetrahydrofolate + H2O = 2-dehydropantoate + (6S)-5,6,7,8-tetrahydrofolate. Its pathway is cofactor biosynthesis; (R)-pantothenate biosynthesis; (R)-pantoate from 3-methyl-2-oxobutanoate: step 1/2. In terms of biological role, catalyzes the reversible reaction in which hydroxymethyl group from 5,10-methylenetetrahydrofolate is transferred onto alpha-ketoisovalerate to form ketopantoate. The chain is 3-methyl-2-oxobutanoate hydroxymethyltransferase from Arthrobacter sp. (strain FB24).